Reading from the N-terminus, the 395-residue chain is G-protein coupled receptor 182 (395 aa).

Residues 1–53 (MSVIPSPRPVSTLEPDNDFRDIHNWTELLHLFNQTFTDCHIEFNENTKHVVLF) are Extracellular-facing. Asparagine 24 and asparagine 33 each carry an N-linked (GlcNAc...) asparagine glycan. A helical transmembrane segment spans residues 54 to 75 (VFYLAIFVVGLVENVLVICVNC). Residues 76-86 (RRSGRVGMLNL) lie on the Cytoplasmic side of the membrane. A helical transmembrane segment spans residues 87–109 (YILNMAIADLGIILSLPVWMLEV). The Extracellular portion of the chain corresponds to 110–123 (MLEYTWLWGSFSCR). Cysteine 122 and cysteine 198 are joined by a disulfide. The helical transmembrane segment at 124–145 (FIHYFYLVNMYSSIFFLTCLSI) threads the bilayer. The Cytoplasmic portion of the chain corresponds to 146 to 166 (DRYVTLTNTSPSWQRHQHRIR). A helical membrane pass occupies residues 167-189 (RAVCAGVWVLSAIIPLPEVVHIQ). Residues 190 to 213 (LLDGSEPMCLFLAPFETYSAWALA) lie on the Extracellular side of the membrane. A helical transmembrane segment spans residues 214–235 (VALSATILGFLLPFLLIAVFNI). Residues 236 to 254 (LTACRLRRQRQTESRRHCL) are Cytoplasmic-facing. A helical transmembrane segment spans residues 255 to 276 (LMWAYIVVFAICWLPYQVTMLL). Over 277–295 (LTLHGTHIFLHCHLVNLLY) the chain is Extracellular. Residues 296–316 (FFYEIIDCFSMLHCVANPILY) form a helical membrane-spanning segment. Over 317–395 (NFLSPSFRGR…QTPHLHSAIL (79 aa)) the chain is Cytoplasmic. A Phosphoserine modification is found at serine 329.

This sequence belongs to the G-protein coupled receptor 1 family. Expressed in liver and lung.

It localises to the cell membrane. Orphan receptor. In Mus musculus (Mouse), this protein is G-protein coupled receptor 182 (Gpr182).